A 468-amino-acid polypeptide reads, in one-letter code: Cysteine--tRNA ligase (468 aa).

A Zn(2+)-binding site is contributed by Cys-29. The short motif at 31-41 (PTVYNYIHIGN) is the 'HIGH' region element. Zn(2+)-binding residues include Cys-209, His-234, and Glu-238. A 'KMSKS' region motif is present at residues 266–270 (KMSKS). Lys-269 is an ATP binding site. Ser-270 carries the post-translational modification Phosphoserine.

This sequence belongs to the class-I aminoacyl-tRNA synthetase family. Monomer. Zn(2+) serves as cofactor.

The protein resides in the cytoplasm. The catalysed reaction is tRNA(Cys) + L-cysteine + ATP = L-cysteinyl-tRNA(Cys) + AMP + diphosphate. This is Cysteine--tRNA ligase from Oceanobacillus iheyensis (strain DSM 14371 / CIP 107618 / JCM 11309 / KCTC 3954 / HTE831).